Reading from the N-terminus, the 292-residue chain is Nitrogenase iron protein (292 aa).

8-15 (GKGGIGKS) is a binding site for ATP. Cysteine 96 contacts [4Fe-4S] cluster. Arginine 99 carries the ADP-ribosylarginine; by dinitrogenase reductase ADP-ribosyltransferase modification. Cysteine 130 serves as a coordination point for [4Fe-4S] cluster.

This sequence belongs to the NifH/BchL/ChlL family. In terms of assembly, homodimer. [4Fe-4S] cluster is required as a cofactor. Post-translationally, the reversible ADP-ribosylation of Arg-99 inactivates the nitrogenase reductase and regulates nitrogenase activity.

It catalyses the reaction N2 + 8 reduced [2Fe-2S]-[ferredoxin] + 16 ATP + 16 H2O = H2 + 8 oxidized [2Fe-2S]-[ferredoxin] + 2 NH4(+) + 16 ADP + 16 phosphate + 6 H(+). In terms of biological role, the key enzymatic reactions in nitrogen fixation are catalyzed by the nitrogenase complex, which has 2 components: the iron protein and the molybdenum-iron protein. This is Nitrogenase iron protein from Synechococcus sp. (strain JA-3-3Ab) (Cyanobacteria bacterium Yellowstone A-Prime).